A 305-amino-acid chain; its full sequence is Glycine--tRNA ligase alpha subunit (305 aa).

It belongs to the class-II aminoacyl-tRNA synthetase family. As to quaternary structure, tetramer of two alpha and two beta subunits.

It is found in the cytoplasm. The enzyme catalyses tRNA(Gly) + glycine + ATP = glycyl-tRNA(Gly) + AMP + diphosphate. This is Glycine--tRNA ligase alpha subunit from Streptococcus uberis (strain ATCC BAA-854 / 0140J).